A 115-amino-acid chain; its full sequence is Large ribosomal subunit protein bL19 (115 aa).

Belongs to the bacterial ribosomal protein bL19 family.

Its function is as follows. This protein is located at the 30S-50S ribosomal subunit interface and may play a role in the structure and function of the aminoacyl-tRNA binding site. This Streptococcus pyogenes serotype M1 protein is Large ribosomal subunit protein bL19.